Consider the following 162-residue polypeptide: NADH-quinone oxidoreductase subunit C (162 aa).

This sequence belongs to the complex I 30 kDa subunit family. NDH-1 is composed of 14 different subunits. Subunits NuoB, C, D, E, F, and G constitute the peripheral sector of the complex.

The protein resides in the cell inner membrane. It carries out the reaction a quinone + NADH + 5 H(+)(in) = a quinol + NAD(+) + 4 H(+)(out). In terms of biological role, NDH-1 shuttles electrons from NADH, via FMN and iron-sulfur (Fe-S) centers, to quinones in the respiratory chain. The immediate electron acceptor for the enzyme in this species is believed to be ubiquinone. Couples the redox reaction to proton translocation (for every two electrons transferred, four hydrogen ions are translocated across the cytoplasmic membrane), and thus conserves the redox energy in a proton gradient. This is NADH-quinone oxidoreductase subunit C from Geobacter sulfurreducens (strain ATCC 51573 / DSM 12127 / PCA).